Consider the following 357-residue polypeptide: DNA replication and repair protein RecF (357 aa).

30–37 (GANGSGKT) contacts ATP.

This sequence belongs to the RecF family.

Its subcellular location is the cytoplasm. The RecF protein is involved in DNA metabolism; it is required for DNA replication and normal SOS inducibility. RecF binds preferentially to single-stranded, linear DNA. It also seems to bind ATP. The polypeptide is DNA replication and repair protein RecF (Escherichia coli O7:K1 (strain IAI39 / ExPEC)).